Here is a 185-residue protein sequence, read N- to C-terminus: uncharacterized protein (185 aa).

Residues 1–29 form the signal peptide; sequence MKNQEIIEVKSKMFLRIWAFVGSAGMGLA. Cys30 carries N-palmitoyl cysteine lipidation. Cys30 carries the S-diacylglycerol cysteine lipid modification. A helical transmembrane segment spans residues 45–67; it reads YLLAIPAGFLFTLFCLYLFIIFF.

This sequence to B.subtilis YfjE.

The protein resides in the cell membrane. This is an uncharacterized protein from Bacillus subtilis (strain 168).